Reading from the N-terminus, the 160-residue chain is MSVTFPSSGCPSFFNIFYEEGIVMKLTIYYDGQFWVGVVEVVDNGKLRAFRHLFGKEPRDSEVLEFVHNQLLNMMAQAEQEGVRLQGRRQKKINPKRLQRQVSKELKNAGVTSKAQEAIKLELEARKQKKKQIMKEQREHVKEQRYMLKKQKAKKKHRGK.

Positions 69 to 145 form a coiled coil; that stretch reads NQLLNMMAQA…EQREHVKEQR (77 aa). Disordered regions lie at residues 82-109 and 129-160; these read GVRLQGRRQKKINPKRLQRQVSKELKNA and KKKQIMKEQREHVKEQRYMLKKQKAKKKHRGK. The span at 86–99 shows a compositional bias: basic residues; the sequence is QGRRQKKINPKRLQ. Basic and acidic residues predominate over residues 133–146; sequence IMKEQREHVKEQRY. Residues 147 to 160 are compositionally biased toward basic residues; that stretch reads MLKKQKAKKKHRGK.

This is an uncharacterized protein from Bacillus subtilis (strain 168).